We begin with the raw amino-acid sequence, 222 residues long: Phosphoenolpyruvate guanylyltransferase (222 aa).

Thr-134, Gly-150, and Ser-153 together coordinate phosphoenolpyruvate.

This sequence belongs to the CofC family.

It carries out the reaction phosphoenolpyruvate + GTP + H(+) = enolpyruvoyl-2-diphospho-5'-guanosine + diphosphate. Its pathway is cofactor biosynthesis; coenzyme F420 biosynthesis. Its function is as follows. Guanylyltransferase that catalyzes the activation of phosphoenolpyruvate (PEP) as enolpyruvoyl-2-diphospho-5'-guanosine, via the condensation of PEP with GTP. It is involved in the biosynthesis of coenzyme F420, a hydride carrier cofactor. This Roseiflexus sp. (strain RS-1) protein is Phosphoenolpyruvate guanylyltransferase.